A 296-amino-acid chain; its full sequence is tRNA pseudouridine synthase B (296 aa).

Aspartate 38 serves as the catalytic Nucleophile.

The protein belongs to the pseudouridine synthase TruB family. Type 1 subfamily.

It carries out the reaction uridine(55) in tRNA = pseudouridine(55) in tRNA. Responsible for synthesis of pseudouridine from uracil-55 in the psi GC loop of transfer RNAs. The protein is tRNA pseudouridine synthase B of Ehrlichia ruminantium (strain Gardel).